Reading from the N-terminus, the 588-residue chain is Serine/threonine-protein phosphatase 2A 65 kDa regulatory subunit A alpha isoform (588 aa).

HEAT repeat units lie at residues 2-42 (AMVD…ALGE), 44-80 (RTRK…FVGG), 81-119 (IEFA…QMKE), 158-196 (DVLK…TVES), 197-235 (TFLI…LLEP), 236-274 (QDCV…AVGP), 275-313 (DCTR…LLNP), 315-352 (LAIQ…ILGK), 353-391 (DSTI…VIGI), 393-430 (LLSQ…QLGI), 432-469 (FFDD…EFGP), 470-508 (EWAM…VMGS), 509-547 (EITC…IVDQ), and 549-586 (VVDK…STAA).

It belongs to the phosphatase 2A regulatory subunit A family. In terms of assembly, PP2A consists of a common heterodimeric core enzyme, composed of a 36 kDa catalytic subunit (subunit C) and a 65 kDa constant regulatory subunit (subunit A), that associates with a variety of regulatory subunits such as subunits B (the R2/B/PR55/B55, R3/B''/PR72/PR130/PR59 and R5/B'/B56 families) and the regulatory subunits TON2. Interacts with CYP20-1/ROC7. Also interacts with phosphatidic acid (PA), a lipid signaling molecule. Interacts with CHIP. Interacts with SIC/RON3. In terms of processing, ubiquitinated. CHIP-mediated ubiquitination enhances phosphatase activity after an abiotic stress such as low temperature or darkness. As to expression, mostly expressed in cell-dividing tissues such as apical meristems. Ubiquitous, with higher levels in roots and flowers (at protein level).

It localises to the cytoplasm. The protein localises to the cytosol. The protein resides in the nucleus. The A subunit of protein phosphatase 2A serves as a scaffolding molecule to coordinate the assembly of the catalytic subunit and a variable regulatory B subunit. Seems to act as a positive regulator of PP2A catalytic activity. Confers resistance to phosphatase inhibitors such as okadaic acid and cantharidin. Involved during developmental process such as seedling and floral developments, root gravitropism, and stomatal opening regulation. Involved in the regulation of auxin efflux, especially during basipetal (tips to base) auxin transport in roots, and appears to contribute to the perception of auxin efflux inhibitors such as 1-N-naphthylphthalamic acid (NPA) and to semicarbazone I (substituted phenylsemicarbazone of 2-acetylarylcarboxylic acids) (SCB-I). Modulates the magnitude of ethylene response in the hypocotyl and stem, and functions as a general positive transducer of early ABA signaling. The holoenzyme composed of PP2AA1, PP2A4 and B'ZETA or B'ETA acts as a negative regulator of plant innate immunity by controlling BAK1 phosphorylation state and activation in surface-localized immune receptor complexes. In Arabidopsis thaliana (Mouse-ear cress), this protein is Serine/threonine-protein phosphatase 2A 65 kDa regulatory subunit A alpha isoform (PP2AA1).